Reading from the N-terminus, the 644-residue chain is Exoribonuclease 2 (644 aa).

One can recognise an RNB domain in the interval 189–516 (REDLTALNFV…NHRLLKAMIT (328 aa)). The S1 motif domain occupies 561-643 (DTRFTAEIID…ETRNVIARPV (83 aa)).

Belongs to the RNR ribonuclease family. RNase II subfamily.

The protein localises to the cytoplasm. The catalysed reaction is Exonucleolytic cleavage in the 3'- to 5'-direction to yield nucleoside 5'-phosphates.. In terms of biological role, involved in mRNA degradation. Hydrolyzes single-stranded polyribonucleotides processively in the 3' to 5' direction. The polypeptide is Exoribonuclease 2 (Yersinia pseudotuberculosis serotype IB (strain PB1/+)).